The primary structure comprises 714 residues: ABC transporter B family member 28 (714 aa).

Helical transmembrane passes span 109–129 (LSVCLLTLLGCSTCTLSMPVF), 161–181 (IFTIAFVTNMTAIWENVMAIL), 240–260 (ICILFTLSPQLAPVLGLLMLA), 340–360 (VAVYISLLALYCLGGSKVKTG), and 361–381 (ELAVGTVVSFIGYTFTLTFAV). The ABC transmembrane type-1 domain occupies 109 to 393 (LSVCLLTLLG…LVNTFGDLRG (285 aa)). The ABC transporter domain maps to 470-708 (VCLDDVHFAY…KGSYASLVGT (239 aa)). 505–512 (GSSGAGKS) is a binding site for ATP.

The protein belongs to the ABC transporter superfamily. ABCB family. Multidrug resistance exporter (TC 3.A.1.201) subfamily.

It is found in the membrane. The polypeptide is ABC transporter B family member 28 (ABCB28) (Arabidopsis thaliana (Mouse-ear cress)).